A 1105-amino-acid chain; its full sequence is Probable diguanylate cyclase DgcE (1105 aa).

The next 10 helical transmembrane spans lie at 9–29 (LIAL…SFIF), 38–58 (QFGT…VAFY), 64–84 (MWPG…ILLF), 88–108 (SLNM…AVLL), 127–147 (LALG…VLLT), 156–176 (FLIW…LGLL), 190–207 (LLFE…LSWL), 211–228 (YLPW…WSAV), 236–256 (FLIF…DPSL), and 270–290 (WLPF…MYAF). The PAS 1 domain maps to 300–370 (SETHFRNAME…QQVEKLISGE (71 aa)). PAC domains follow at residues 374 to 426 (YSME…VNQQ) and 501 to 552 (FKLE…ALFQ). The PAS 2 domain occupies 553 to 623 (EKERLHITLD…LMENIYSADT (71 aa)). The 55-residue stretch at 626–680 (SAIEQDVVLHCRSGGSYDVHYSITPLSTLDGSNIGSVLVIQDVTESRKMLRQLSY) folds into the PAC 3 domain. The region spanning 712–845 (QRHALVFIDL…GRGRVTVYEP (134 aa)) is the GGDEF domain. Asp-720 contributes to the Mg(2+) binding site. Residues Asn-728, His-733, and Asp-737 each contribute to the substrate site. Asp-763 is a Mg(2+) binding site. Catalysis depends on Asp-763, which acts as the Proton acceptor. Position 783 (Arg-783) interacts with substrate. One can recognise an EAL domain in the interval 855–1104 (AAMSLDEQWR…LLVNSSYFAI (250 aa)).

In terms of assembly, homodimer. Mg(2+) serves as cofactor.

Its subcellular location is the cell inner membrane. The catalysed reaction is 2 GTP = 3',3'-c-di-GMP + 2 diphosphate. It functions in the pathway purine metabolism; 3',5'-cyclic di-GMP biosynthesis. Functionally, catalyzes the synthesis of cyclic-di-GMP (c-di-GMP) via the condensation of 2 GTP molecules. Involved in the control of the switch from cell motility to adhesion via regulation of cellular levels of c-di-GMP. Part of a signaling cascade that regulates curli biosynthesis. The cascade is composed of two c-di-GMP control modules, in which c-di-GMP controlled by the DgcE/PdeH pair (module I) regulates the activity of the DgcM/PdeR pair (module II), which in turn regulates activity of the transcription factor MlrA and expression of the master biofilm regulator csgD. The polypeptide is Probable diguanylate cyclase DgcE (Escherichia coli (strain K12)).